The primary structure comprises 327 residues: Undecaprenyl-phosphate 4-deoxy-4-formamido-L-arabinose transferase (327 aa).

A run of 2 helical transmembrane segments spans residues 235–255 and 270–290; these read LLSLVGSAIALLGFTFSVLLV and VFTLFAVLFMFIGAQFVGMGL.

This sequence belongs to the glycosyltransferase 2 family.

Its subcellular location is the cell inner membrane. The enzyme catalyses UDP-4-deoxy-4-formamido-beta-L-arabinose + di-trans,octa-cis-undecaprenyl phosphate = 4-deoxy-4-formamido-alpha-L-arabinopyranosyl di-trans,octa-cis-undecaprenyl phosphate + UDP. It functions in the pathway glycolipid biosynthesis; 4-amino-4-deoxy-alpha-L-arabinose undecaprenyl phosphate biosynthesis; 4-amino-4-deoxy-alpha-L-arabinose undecaprenyl phosphate from UDP-4-deoxy-4-formamido-beta-L-arabinose and undecaprenyl phosphate: step 1/2. It participates in bacterial outer membrane biogenesis; lipopolysaccharide biosynthesis. In terms of biological role, catalyzes the transfer of 4-deoxy-4-formamido-L-arabinose from UDP to undecaprenyl phosphate. The modified arabinose is attached to lipid A and is required for resistance to polymyxin and cationic antimicrobial peptides. This chain is Undecaprenyl-phosphate 4-deoxy-4-formamido-L-arabinose transferase, found in Yersinia pestis bv. Antiqua (strain Antiqua).